Consider the following 203-residue polypeptide: MSRYRGPRVRIIRRLGTLPGLTNRSAPQLKPSSINQSTSNKKISQYRIRLEEKQKLRFHYGITERQLLNYVRIARKAKGSTGEILLQLLEMRLDNIIFRLGMTPTIPGARQLVNHRHILVNGYIVDIPSYRCKPQDFITIKNKQKSESIISKNIEFYQKSKIANHLTYSSLEKKGLVNQILDRESIGLKINELLVVEYYSRQA.

The region spanning 91–159 is the S4 RNA-binding domain; that stretch reads MRLDNIIFRL…ISKNIEFYQK (69 aa).

It belongs to the universal ribosomal protein uS4 family. Part of the 30S ribosomal subunit. Contacts protein S5. The interaction surface between S4 and S5 is involved in control of translational fidelity.

Its subcellular location is the plastid. The protein resides in the chloroplast. In terms of biological role, one of the primary rRNA binding proteins, it binds directly to 16S rRNA where it nucleates assembly of the body of the 30S subunit. Functionally, with S5 and S12 plays an important role in translational accuracy. In Lopidium concinnum (Moss), this protein is Small ribosomal subunit protein uS4c (rps4).